The primary structure comprises 248 residues: 2,3-bisphosphoglycerate-dependent phosphoglycerate mutase (248 aa).

Substrate contacts are provided by residues 8-15 (RHGESTWN), 21-22 (TG), Arg60, 87-90 (ERHY), Lys98, 114-115 (RR), and 183-184 (GN). The active-site Tele-phosphohistidine intermediate is His9. Residue Glu87 is the Proton donor/acceptor of the active site.

The protein belongs to the phosphoglycerate mutase family. BPG-dependent PGAM subfamily.

It catalyses the reaction (2R)-2-phosphoglycerate = (2R)-3-phosphoglycerate. Its pathway is carbohydrate degradation; glycolysis; pyruvate from D-glyceraldehyde 3-phosphate: step 3/5. Catalyzes the interconversion of 2-phosphoglycerate and 3-phosphoglycerate. This Solibacter usitatus (strain Ellin6076) protein is 2,3-bisphosphoglycerate-dependent phosphoglycerate mutase.